A 261-amino-acid polypeptide reads, in one-letter code: 3-hydroxyacyl-CoA dehydrogenase type-2 (261 aa).

Ala-2 carries the N-acetylalanine modification. 3 residues coordinate NAD(+): Ser-20, Leu-22, and Asp-41. Lys-53 carries the post-translational modification N6-acetyllysine; alternate. At Lys-53 the chain carries N6-succinyllysine; alternate. Residues Asp-64 and Val-65 each contribute to the NAD(+) site. N6-acetyllysine is present on Lys-69. Cys-91 serves as a coordination point for NAD(+). N6-acetyllysine is present on residues Lys-99 and Lys-105. Position 155 (Ser-155) interacts with substrate. NAD(+) is bound by residues Tyr-168, Lys-172, Phe-201, and Thr-203. The Proton acceptor role is filled by Tyr-168. An N6-acetyllysine; alternate modification is found at Lys-212. Lys-212 carries the N6-succinyllysine; alternate modification.

It belongs to the short-chain dehydrogenases/reductases (SDR) family. In terms of assembly, homotetramer. Component of mitochondrial ribonuclease P, a complex composed of TRMT10C/MRPP1, HSD17B10/MRPP2 and PRORP/MRPP3. Interacts with TRMT10C/MRPP1; forming the MRPP1-MRPP2 subcomplex of the mitochondrial ribonuclease P complex. In terms of tissue distribution, ubiquitously expressed in normal tissues but is overexpressed in neurons affected in AD.

The protein localises to the mitochondrion. Its subcellular location is the mitochondrion matrix. The protein resides in the mitochondrion nucleoid. The enzyme catalyses a (3S)-3-hydroxyacyl-CoA + NAD(+) = a 3-oxoacyl-CoA + NADH + H(+). The catalysed reaction is (2S,3S)-3-hydroxy-2-methylbutanoyl-CoA + NAD(+) = 2-methyl-3-oxobutanoyl-CoA + NADH + H(+). It carries out the reaction testosterone + NAD(+) = androst-4-ene-3,17-dione + NADH + H(+). It catalyses the reaction 5alpha-androstane-3alpha,17beta-diol + NAD(+) = 17beta-hydroxy-5alpha-androstan-3-one + NADH + H(+). The enzyme catalyses 17beta-estradiol + NAD(+) = estrone + NADH + H(+). The catalysed reaction is cholate + NAD(+) = 3alpha,12alpha-dihydroxy-7-oxo-5beta-cholanate + NADH + H(+). It carries out the reaction (3S)-3-hydroxybutanoyl-CoA + NAD(+) = acetoacetyl-CoA + NADH + H(+). It catalyses the reaction (3S)-hydroxyoctanoyl-CoA + NAD(+) = 3-oxooctanoyl-CoA + NADH + H(+). The enzyme catalyses (3S)-hydroxyhexadecanoyl-CoA + NAD(+) = 3-oxohexadecanoyl-CoA + NADH + H(+). The catalysed reaction is 17beta-hydroxy-5alpha-androstan-3-one + NAD(+) = 5alpha-androstan-3,17-dione + NADH + H(+). It carries out the reaction 5alpha-pregnan-20beta-ol-3-one + NAD(+) = 5alpha-pregnane-3,20-dione + NADH + H(+). It catalyses the reaction 3alpha-hydroxy-5alpha-pregnan-20-one + NAD(+) = 5alpha-pregnane-3,20-dione + NADH + H(+). The enzyme catalyses cortisone + NAD(+) = 17alpha-hydroxypregn-4-en-3,11,20-trione-21-al + NADH + H(+). The catalysed reaction is 11-dehydrocorticosterone + NAD(+) = pregn-4-ene-3,11,20,21-tetraone + NADH + H(+). It carries out the reaction cortisol + NAD(+) = 11beta,17alpha-dihydroxypregn-4-ene-3,20,21-trione + NADH + H(+). It catalyses the reaction chenodeoxycholate + NAD(+) = 7-oxolithocholate + NADH + H(+). The enzyme catalyses ursodeoxycholate + NAD(+) = 7-oxolithocholate + NADH + H(+). The catalysed reaction is 3beta,7beta-dihydroxy-5beta-cholan-24-oate + NAD(+) = 3beta-hydroxy-7-oxo-5beta-cholan-24-oate + NADH + H(+). The protein operates within amino-acid degradation; L-isoleucine degradation. Its pathway is lipid metabolism; fatty acid beta-oxidation. It functions in the pathway steroid metabolism. It participates in lipid metabolism; bile acid biosynthesis. With respect to regulation, the phospholipase C-like activity toward cardiolipin is inhibited by amyloid-beta peptide. Mitochondrial dehydrogenase involved in pathways of fatty acid, branched-chain amino acid and steroid metabolism. Acts as (S)-3-hydroxyacyl-CoA dehydrogenase in mitochondrial fatty acid beta-oxidation, a major degradation pathway of fatty acids. Catalyzes the third step in the beta-oxidation cycle, namely the reversible conversion of (S)-3-hydroxyacyl-CoA to 3-ketoacyl-CoA. Preferentially accepts straight medium- and short-chain acyl-CoA substrates with highest efficiency for (3S)-hydroxybutanoyl-CoA. Acts as 3-hydroxy-2-methylbutyryl-CoA dehydrogenase in branched-chain amino acid catabolic pathway. Catalyzes the oxidation of 3-hydroxy-2-methylbutanoyl-CoA into 2-methyl-3-oxobutanoyl-CoA, a step in isoleucine degradation pathway. Has hydroxysteroid dehydrogenase activity toward steroid hormones and bile acids. Catalyzes the oxidation of 3alpha-, 17beta-, 20beta- and 21-hydroxysteroids and 7alpha- and 7beta-hydroxy bile acids. Oxidizes allopregnanolone/brexanolone at the 3alpha-hydroxyl group, which is known to be critical for the activation of gamma-aminobutyric acid receptors (GABAARs) chloride channel. Has phospholipase C-like activity toward cardiolipin and its oxidized species. Likely oxidizes the 2'-hydroxyl in the head group of cardiolipin to form a ketone intermediate that undergoes nucleophilic attack by water and fragments into diacylglycerol, dihydroxyacetone and orthophosphate. Has higher affinity for cardiolipin with oxidized fatty acids and may degrade these species during the oxidative stress response to protect cells from apoptosis. By interacting with intracellular amyloid-beta, it may contribute to the neuronal dysfunction associated with Alzheimer disease (AD). Essential for structural and functional integrity of mitochondria. In terms of biological role, in addition to mitochondrial dehydrogenase activity, moonlights as a component of mitochondrial ribonuclease P, a complex that cleaves tRNA molecules in their 5'-ends. Together with TRMT10C/MRPP1, forms a subcomplex of the mitochondrial ribonuclease P, named MRPP1-MRPP2 subcomplex, which displays functions that are independent of the ribonuclease P activity. The MRPP1-MRPP2 subcomplex catalyzes the formation of N(1)-methylguanine and N(1)-methyladenine at position 9 (m1G9 and m1A9, respectively) in tRNAs; HSD17B10/MRPP2 acting as a non-catalytic subunit. The MRPP1-MRPP2 subcomplex also acts as a tRNA maturation platform: following 5'-end cleavage by the mitochondrial ribonuclease P complex, the MRPP1-MRPP2 subcomplex enhances the efficiency of 3'-processing catalyzed by ELAC2, retains the tRNA product after ELAC2 processing and presents the nascent tRNA to the mitochondrial CCA tRNA nucleotidyltransferase TRNT1 enzyme. Associates with mitochondrial DNA complexes at the nucleoids to initiate RNA processing and ribosome assembly. The polypeptide is 3-hydroxyacyl-CoA dehydrogenase type-2 (HSD17B10) (Homo sapiens (Human)).